We begin with the raw amino-acid sequence, 492 residues long: 3-octaprenyl-4-hydroxybenzoate carboxy-lyase (492 aa).

Position 177 (N177) interacts with Mn(2+). Residues 180–182, 194–196, and 199–200 contribute to the prenylated FMN site; these read IYR, RWL, and RG. Mn(2+) is bound at residue E243. D292 serves as the catalytic Proton donor.

It belongs to the UbiD family. In terms of assembly, homohexamer. Requires prenylated FMN as cofactor. Mn(2+) serves as cofactor.

Its subcellular location is the cell membrane. The enzyme catalyses a 4-hydroxy-3-(all-trans-polyprenyl)benzoate + H(+) = a 2-(all-trans-polyprenyl)phenol + CO2. Its pathway is cofactor biosynthesis; ubiquinone biosynthesis. Catalyzes the decarboxylation of 3-octaprenyl-4-hydroxy benzoate to 2-octaprenylphenol, an intermediate step in ubiquinone biosynthesis. The sequence is that of 3-octaprenyl-4-hydroxybenzoate carboxy-lyase from Neisseria meningitidis serogroup C / serotype 2a (strain ATCC 700532 / DSM 15464 / FAM18).